The following is a 255-amino-acid chain: DNA repair protein RecO (255 aa).

It belongs to the RecO family.

In terms of biological role, involved in DNA repair and RecF pathway recombination. This Acidithiobacillus ferrooxidans (strain ATCC 23270 / DSM 14882 / CIP 104768 / NCIMB 8455) (Ferrobacillus ferrooxidans (strain ATCC 23270)) protein is DNA repair protein RecO.